A 249-amino-acid polypeptide reads, in one-letter code: DNA polymerase sliding clamp (249 aa).

Belongs to the PCNA family. As to quaternary structure, the subunits circularize to form a toroid; DNA passes through its center. Replication factor C (RFC) is required to load the toroid on the DNA. Homotrimer. Interacts with NucS.

In terms of biological role, sliding clamp subunit that acts as a moving platform for DNA processing. Responsible for tethering the catalytic subunit of DNA polymerase and other proteins to DNA during high-speed replication. Regulates activity of NucS endonuclease and prevents non-specific cleavage. In Pyrococcus abyssi (strain GE5 / Orsay), this protein is DNA polymerase sliding clamp.